Here is a 208-residue protein sequence, read N- to C-terminus: Interleukin-6 (208 aa).

An N-terminal signal peptide occupies residues 1-27 (MTFLSTSAFSPLAFSLGLLLVVATAFP). Cys-68 and Cys-74 form a disulfide bridge. A Phosphoserine modification is found at Ser-77. An intrachain disulfide couples Cys-97 to Cys-107.

Belongs to the IL-6 superfamily. In terms of assembly, component of a hexamer of two molecules each of IL6, IL6R and IL6ST; first binds to IL6R to associate with the signaling subunit IL6ST. Interacts with IL6R (via the N-terminal ectodomain); this interaction may be affected by IL6R-binding with SORL1, hence decreasing IL6 cis signaling. Interacts with SORL1 (via the N-terminal ectodomain); this interaction leads to IL6 internalization and lysosomal degradation. May form a trimeric complex with the soluble SORL1 ectodomain and soluble IL6R receptor; this interaction might stabilize circulating IL6, hence promoting IL6 trans signaling.

It localises to the secreted. Cytokine with a wide variety of biological functions in immunity, tissue regeneration, and metabolism. Binds to IL6R, then the complex associates to the signaling subunit IL6ST/gp130 to trigger the intracellular IL6-signaling pathway. The interaction with the membrane-bound IL6R and IL6ST stimulates 'classic signaling', whereas the binding of IL6 and soluble IL6R to IL6ST stimulates 'trans-signaling'. Alternatively, 'cluster signaling' occurs when membrane-bound IL6:IL6R complexes on transmitter cells activate IL6ST receptors on neighboring receiver cells. Its function is as follows. IL6 is a potent inducer of the acute phase response. Rapid production of IL6 contributes to host defense during infection and tissue injury, but excessive IL6 synthesis is involved in disease pathology. In the innate immune response, is synthesized by myeloid cells, such as macrophages and dendritic cells, upon recognition of pathogens through toll-like receptors (TLRs) at the site of infection or tissue injury. In the adaptive immune response, is required for the differentiation of B cells into immunoglobulin-secreting cells. Plays a major role in the differentiation of CD4(+) T cell subsets. Essential factor for the development of T follicular helper (Tfh) cells that are required for the induction of germinal-center formation. Required to drive naive CD4(+) T cells to the Th17 lineage. Also required for proliferation of myeloma cells and the survival of plasmablast cells. In terms of biological role, acts as an essential factor in bone homeostasis and on vessels directly or indirectly by induction of VEGF, resulting in increased angiogenesis activity and vascular permeability. Induces, through 'trans-signaling' and synergistically with IL1B and TNF, the production of VEGF. Involved in metabolic controls, is discharged into the bloodstream after muscle contraction increasing lipolysis and improving insulin resistance. 'Trans-signaling' in central nervous system also regulates energy and glucose homeostasis. Mediates, through GLP-1, crosstalk between insulin-sensitive tissues, intestinal L cells and pancreatic islets to adapt to changes in insulin demand. Also acts as a myokine. Plays a protective role during liver injury, being required for maintenance of tissue regeneration. Also has a pivotal role in iron metabolism by regulating HAMP/hepcidin expression upon inflammation or bacterial infection. Through activation of IL6ST-YAP-NOTCH pathway, induces inflammation-induced epithelial regeneration. This chain is Interleukin-6 (IL6), found in Felis catus (Cat).